Consider the following 303-residue polypeptide: Probable 5-dehydro-4-deoxyglucarate dehydratase (303 aa).

Belongs to the DapA family.

It carries out the reaction 5-dehydro-4-deoxy-D-glucarate + H(+) = 2,5-dioxopentanoate + CO2 + H2O. Its pathway is carbohydrate acid metabolism; D-glucarate degradation; 2,5-dioxopentanoate from D-glucarate: step 2/2. This chain is Probable 5-dehydro-4-deoxyglucarate dehydratase, found in Delftia acidovorans (strain DSM 14801 / SPH-1).